We begin with the raw amino-acid sequence, 166 residues long: Disulfide bond formation protein B (166 aa).

Residues Met1 to Gly11 are Cytoplasmic-facing. Residues Tyr12 to Phe28 form a helical membrane-spanning segment. Topologically, residues Leu29–Ile46 are periplasmic. A disulfide bond links Cys38 and Cys41. Residues Ala47 to Pro63 traverse the membrane as a helical segment. Topologically, residues Gly64–Lys69 are cytoplasmic. Residues Val70 to Ala87 form a helical membrane-spanning segment. Residues Arg88–Gln144 are Periplasmic-facing. A disulfide bridge links Cys103 with Cys130. The helical transmembrane segment at Leu145–His163 threads the bilayer. The Cytoplasmic segment spans residues Lys164–Ala166.

This sequence belongs to the DsbB family.

It is found in the cell inner membrane. Functionally, required for disulfide bond formation in some periplasmic proteins. Acts by oxidizing the DsbA protein. This Methylobacillus flagellatus (strain ATCC 51484 / DSM 6875 / VKM B-1610 / KT) protein is Disulfide bond formation protein B.